We begin with the raw amino-acid sequence, 156 residues long: ATP synthase subunit b (156 aa).

A helical transmembrane segment spans residues Ala-11–Ala-31.

It belongs to the ATPase B chain family. F-type ATPases have 2 components, F(1) - the catalytic core - and F(0) - the membrane proton channel. F(1) has five subunits: alpha(3), beta(3), gamma(1), delta(1), epsilon(1). F(0) has three main subunits: a(1), b(2) and c(10-14). The alpha and beta chains form an alternating ring which encloses part of the gamma chain. F(1) is attached to F(0) by a central stalk formed by the gamma and epsilon chains, while a peripheral stalk is formed by the delta and b chains.

The protein localises to the cell inner membrane. Functionally, f(1)F(0) ATP synthase produces ATP from ADP in the presence of a proton or sodium gradient. F-type ATPases consist of two structural domains, F(1) containing the extramembraneous catalytic core and F(0) containing the membrane proton channel, linked together by a central stalk and a peripheral stalk. During catalysis, ATP synthesis in the catalytic domain of F(1) is coupled via a rotary mechanism of the central stalk subunits to proton translocation. In terms of biological role, component of the F(0) channel, it forms part of the peripheral stalk, linking F(1) to F(0). The polypeptide is ATP synthase subunit b (Photorhabdus laumondii subsp. laumondii (strain DSM 15139 / CIP 105565 / TT01) (Photorhabdus luminescens subsp. laumondii)).